We begin with the raw amino-acid sequence, 473 residues long: Serine palmitoyltransferase 1 (473 aa).

The Lumenal segment spans residues 1–15; sequence MATVAEQWVLVEMVQ. The tract at residues 1-66 is interaction with SPTLC2; the sequence is MATVAEQWVL…KEELIEEWQP (66 aa). Residues 16 to 36 form a helical membrane-spanning segment; sequence ALYEAPAYHLILEGILILWII. Over 37–473 the chain is Cytoplasmic; the sequence is RLVFSKTYKL…IREAAQAVLL (437 aa). Residue Tyr-164 is modified to Phosphotyrosine; by ABL.

It belongs to the class-II pyridoxal-phosphate-dependent aminotransferase family. In terms of assembly, component of the serine palmitoyltransferase (SPT) complex, which is also composed of SPTLC2 or SPTLC3 and SPTSSA or SPTSSB. The heterodimer with SPTLC2 or SPTLC3 forms the catalytic core of the enzyme, while SPTSSA or SPTSSB subunits determine substrate specificity. SPT also interacts with ORMDL proteins, especially ORMDL3, which negatively regulate SPT activity in the presence of ceramides. Forms dimers of heterodimers with SPTLC2. Interacts with RTN4 (isoform B). Pyridoxal 5'-phosphate serves as cofactor. In terms of processing, phosphorylation at Tyr-164 inhibits activity and promotes cell survival. In terms of tissue distribution, expressed in a variety of tissues. Highest expression in brain, kidney and liver. Expressed in brown and white adipose tissues.

The protein localises to the endoplasmic reticulum membrane. The catalysed reaction is L-serine + hexadecanoyl-CoA + H(+) = 3-oxosphinganine + CO2 + CoA. It carries out the reaction octadecanoyl-CoA + L-serine + H(+) = 3-oxoeicosasphinganine + CO2 + CoA. It catalyses the reaction tetradecanoyl-CoA + L-serine + H(+) = 3-oxohexadecasphinganine + CO2 + CoA. The enzyme catalyses dodecanoyl-CoA + L-serine + H(+) = 3-oxotetradecasphinganine + CO2 + CoA. It functions in the pathway lipid metabolism; sphingolipid metabolism. With respect to regulation, SPT complex catalytic activity is negatively regulated by ORMDL proteins, including ORMDL3, in the presence of ceramides. This mechanism allows to maintain ceramide levels at sufficient concentrations for the production of complex sphingolipids, but which prevents the accumulation of ceramides to levels that trigger apoptosis. Component of the serine palmitoyltransferase multisubunit enzyme (SPT) that catalyzes the initial and rate-limiting step in sphingolipid biosynthesis by condensing L-serine and activated acyl-CoA (most commonly palmitoyl-CoA) to form long-chain bases. The SPT complex is also composed of SPTLC2 or SPTLC3 and SPTSSA or SPTSSB. Within this complex, the heterodimer with SPTLC2 or SPTLC3 forms the catalytic core. The composition of the serine palmitoyltransferase (SPT) complex determines the substrate preference. The SPTLC1-SPTLC2-SPTSSA complex shows a strong preference for C16-CoA substrate, while the SPTLC1-SPTLC3-SPTSSA isozyme uses both C14-CoA and C16-CoA as substrates, with a slight preference for C14-CoA. The SPTLC1-SPTLC2-SPTSSB complex shows a strong preference for C18-CoA substrate, while the SPTLC1-SPTLC3-SPTSSB isozyme displays an ability to use a broader range of acyl-CoAs, without apparent preference. Required for adipocyte cell viability and metabolic homeostasis. The protein is Serine palmitoyltransferase 1 (Sptlc1) of Mus musculus (Mouse).